Here is a 159-residue protein sequence, read N- to C-terminus: Neuroglobin (159 aa).

Residues 3–151 enclose the Globin domain; the sequence is KLSEKDKELI…VVAAMSQGWA (149 aa). Heme b-binding residues include H66 and H98.

It belongs to the globin family. In terms of assembly, monomer. Homodimers and homotetramers. Mainly monomeric but also detected as part of homodimers and homotetramers.

It is found in the cytoplasm. The protein resides in the cytosol. Its subcellular location is the mitochondrion matrix. The catalysed reaction is Fe(III)-heme b-[protein] + nitric oxide + H2O = Fe(II)-heme b-[protein] + nitrite + 2 H(+). Monomeric globin with a bis-histidyl six-coordinate heme-iron atom through which it can bind dioxygen, carbon monoxide and nitric oxide. Could help transport oxygen and increase its availability to the metabolically active neuronal tissues, though its low quantity in tissues as well as its high affinity for dioxygen, which may limit its oxygen-releasing ability, argue against it. The ferrous/deoxygenated form exhibits a nitrite reductase activity and it could produce nitric oxide which in turn inhibits cellular respiration in response to hypoxia. In its ferrous/deoxygenated state, it may also exhibit GDI (Guanine nucleotide Dissociation Inhibitor) activity toward heterotrimeric G-alpha proteins, thereby regulating signal transduction to facilitate neuroprotective responses in the wake of hypoxia and associated oxidative stress. This is Neuroglobin (ngb) from Chaenocephalus aceratus (Blackfin icefish).